A 411-amino-acid polypeptide reads, in one-letter code: MSIGLPRGVQDILPDEIPFWHLIENIARSLFEKYNYEEIRTPIFEFTELFVKGTGETTDIVMKEMYTFQDKKGRSLTLRPEGTPGVIRAYLMNKIYTTKPIWKVYYIGPMFRYERPQSGRYRQFHQLGVEVLGRKDPYIDFEVISLAVEILKSLKLENLEIEINSLGCLKCRPAYREALKNYFYQYKDLLSPIDQERLERNPLRILDSKDEKIIPLKENAPQPLDFLCNDCKDHFDKVLRYLQEASLNFKISPKLVRGLDYYTRTVFEITTTSLGAQNAVVGGGRYDNLVETYGGPSTPGLGFALGMERLILLIKQQDKIKIEKPSLFFLAIENEKYIKKAVEISKILRINHRVEIGSPNEPLRTQLKWADKLNSDYVIFINQMIEKDILRIKNFKTGEEKEIRIENLKEL.

The protein belongs to the class-II aminoacyl-tRNA synthetase family. Homodimer.

It localises to the cytoplasm. It carries out the reaction tRNA(His) + L-histidine + ATP = L-histidyl-tRNA(His) + AMP + diphosphate + H(+). The chain is Histidine--tRNA ligase from Dictyoglomus turgidum (strain DSM 6724 / Z-1310).